The primary structure comprises 161 residues: Large ribosomal subunit protein uL30m (161 aa).

Residues 1–34 constitute a mitochondrion transit peptide; the sequence is MAGILRLVVQWPPGRLQTVTKGVESLICTDWIRH.

It belongs to the universal ribosomal protein uL30 family. As to quaternary structure, component of the mitochondrial large ribosomal subunit (mt-LSU). Mature mammalian 55S mitochondrial ribosomes consist of a small (28S) and a large (39S) subunit. The 28S small subunit contains a 12S ribosomal RNA (12S mt-rRNA) and 30 different proteins. The 39S large subunit contains a 16S rRNA (16S mt-rRNA), a copy of mitochondrial valine transfer RNA (mt-tRNA(Val)), which plays an integral structural role, and 52 different proteins.

Its subcellular location is the mitochondrion. The protein is Large ribosomal subunit protein uL30m (MRPL30) of Homo sapiens (Human).